Consider the following 228-residue polypeptide: MDIERVEQVRAVERLAHRRGLALMPRAGLAAADFVAARLPAGAQVLALAGPGNNGGDALVAATLLQARGYRVAVVMPAGPARLPDDARRAWQDWCAAGGQASADLPAHAPALVIDGLFGIGLARPLDGAWQGLIDQVNAWRVPVLALDVPSGLSAASGQPLGDPPGRPVRATWTLSFIGVPAALRAPGAAAWCGEQYLSLLGLTPAFLAEAVGPCGQATATAARRSGP.

Residues 9–209 (VRAVERLAHR…LLGLTPAFLA (201 aa)) enclose the YjeF N-terminal domain. Residue 53–57 (NNGGD) participates in (6S)-NADPHX binding. Positions 54 and 115 each coordinate K(+). (6S)-NADPHX contacts are provided by residues 119 to 125 (GIGLARP) and aspartate 148. Serine 151 serves as a coordination point for K(+).

It belongs to the NnrE/AIBP family. The cofactor is K(+).

It catalyses the reaction (6R)-NADHX = (6S)-NADHX. The enzyme catalyses (6R)-NADPHX = (6S)-NADPHX. In terms of biological role, catalyzes the epimerization of the S- and R-forms of NAD(P)HX, a damaged form of NAD(P)H that is a result of enzymatic or heat-dependent hydration. This is a prerequisite for the S-specific NAD(P)H-hydrate dehydratase to allow the repair of both epimers of NAD(P)HX. The protein is NAD(P)H-hydrate epimerase of Bordetella pertussis (strain CS).